Consider the following 957-residue polypeptide: Glycine dehydrogenase (decarboxylating) 2 (957 aa).

An N6-(pyridoxal phosphate)lysine modification is found at Lys-707.

The protein belongs to the GcvP family. In terms of assembly, the glycine cleavage system is composed of four proteins: P, T, L and H. The cofactor is pyridoxal 5'-phosphate.

It carries out the reaction N(6)-[(R)-lipoyl]-L-lysyl-[glycine-cleavage complex H protein] + glycine + H(+) = N(6)-[(R)-S(8)-aminomethyldihydrolipoyl]-L-lysyl-[glycine-cleavage complex H protein] + CO2. The glycine cleavage system catalyzes the degradation of glycine. The P protein binds the alpha-amino group of glycine through its pyridoxal phosphate cofactor; CO(2) is released and the remaining methylamine moiety is then transferred to the lipoamide cofactor of the H protein. This chain is Glycine dehydrogenase (decarboxylating) 2 (gcvP2), found in Pseudomonas putida (strain ATCC 47054 / DSM 6125 / CFBP 8728 / NCIMB 11950 / KT2440).